Reading from the N-terminus, the 205-residue chain is MVPCGAVLWRRLLRKRWVLGVVFGLSLVYFLSSTFKQEERTVRDRNLLQVQEHEQPILWKEQFSSGNGSHLSNQCRNSVQGKLLITDELGYICERKDLLVNGCCNVNVPSTKLYSCDSCLPNGCCSVYEYCVSCCLQPSKQHLLERFLNRAAMAFQNLFMAVEDRFELCLAKCRTSSQSVQHENTYRDPIAKYCYGEYPPELLPV.

At 1–16 (MVPCGAVLWRRLLRKR) the chain is on the cytoplasmic side. The helical transmembrane segment at 17–35 (WVLGVVFGLSLVYFLSSTF) threads the bilayer. Residues 36 to 205 (KQEERTVRDR…GEYPPELLPV (170 aa)) lie on the Lumenal side of the membrane. Asparagine 67 carries N-linked (GlcNAc...) asparagine glycosylation.

Belongs to the SPRING family.

The protein localises to the golgi apparatus membrane. Its function is as follows. Positively regulates hepatic SREBP signaling pathway by modulating the proper localization of SCAP (SREBP cleavage-activating protein) to the endoplasmic reticulum, thereby controlling the level of functional SCAP. This chain is SREBP regulating gene protein, found in Gallus gallus (Chicken).